The chain runs to 102 residues: Co-chaperonin GroES (102 aa).

The protein belongs to the GroES chaperonin family. Heptamer of 7 subunits arranged in a ring. Interacts with the chaperonin GroEL.

It is found in the cytoplasm. Together with the chaperonin GroEL, plays an essential role in assisting protein folding. The GroEL-GroES system forms a nano-cage that allows encapsulation of the non-native substrate proteins and provides a physical environment optimized to promote and accelerate protein folding. GroES binds to the apical surface of the GroEL ring, thereby capping the opening of the GroEL channel. The chain is Co-chaperonin GroES from Chlamydia trachomatis serovar L2 (strain ATCC VR-902B / DSM 19102 / 434/Bu).